The sequence spans 803 residues: Volume-regulated anion channel subunit LRRC8C (803 aa).

Residues 1-22 (MIPVTEFRQFSEQQPAFRVLKP) lie on the Cytoplasmic side of the membrane. The helical transmembrane segment at 23–47 (WWDVFTDYLSVAMLMIGVFGCTLQV) threads the bilayer. Over 48-124 (MQDKIICLPK…CYERALHWYA (77 aa)) the chain is Extracellular. Disulfide bonds link Cys-54–Cys-308 and Cys-115–Cys-293. N-linked (GlcNAc...) asparagine glycosylation is found at Asn-64 and Asn-70. A helical transmembrane segment spans residues 125–144 (KYFPYLVLIHTLVFMLCSNF). Over 145–262 (WFKFPGSSSK…EEGDILYAMY (118 aa)) the chain is Cytoplasmic. The tract at residues 177 to 209 (EVSGEDSEEKDNRKNNMNRSNTIQSGPEDSLVN) is disordered. The segment covering 191-209 (NNMNRSNTIQSGPEDSLVN) has biased composition (polar residues). Phosphoserine occurs at positions 212 and 215. A helical transmembrane segment spans residues 263-284 (VRQTVLKVIKFLIIIAYNSALV). Residues 285-314 (SKVQFTVDCNVDIQDMTGYKNFSCNHTMAH) lie on the Extracellular side of the membrane. A helical membrane pass occupies residues 315 to 339 (LFSKLSFCYLCFVSIYGLTCLYTLY). Over 340 to 803 (WLFYRSLREY…SDVREQMKTE (464 aa)) the chain is Cytoplasmic. LRR repeat units follow at residues 397 to 420 (ENKL…KLQT), 421 to 443 (NAHN…VFEI), 446 to 466 (LQSL…IAQL), 467 to 488 (DNLQ…ALSF), 490 to 513 (KENL…MYGL), 515 to 537 (NLEE…TLES), 541 to 563 (LKSL…VVDV), 565 to 587 (SHLQ…NLKK), 588 to 611 (MTNL…VFSL), 613 to 635 (SLQE…SFQH), 636 to 659 (LRKL…IKKL), 660 to 682 (TSLE…LFLC), 684 to 705 (KIRY…IGVL), 706 to 728 (QSLQ…LYFC), 730 to 751 (KLKT…IGNL), 753 to 774 (FLSY…LGDC), and 776 to 799 (ALKR…VREQ).

It belongs to the LRRC8 family. In terms of assembly, heterohexamer; oligomerizes with other LRRC8 proteins (LRRC8A, LRRC8B, LRRC8D and/or LRRC8E) to form a heterohexamer. Homoheptamer; inactive, likely because it is not targeted to the plasma membrane in the absence of LRRC8A. In vivo, the subunit composition may depend primarily on expression levels, and heterooligomeric channels containing various proportions of the different LRRC8 proteins may coexist. In terms of tissue distribution, expressed at highest levels in skeletal muscle, and at moderate levels in heart, lung and peripheral blood leukocytes.

It is found in the cell membrane. Its subcellular location is the endoplasmic reticulum membrane. The catalysed reaction is chloride(in) = chloride(out). The enzyme catalyses iodide(out) = iodide(in). It carries out the reaction taurine(out) = taurine(in). It catalyses the reaction 2',3'-cGAMP(out) = 2',3'-cGAMP(in). Non-essential component of the volume-regulated anion channel (VRAC, also named VSOAC channel), an anion channel required to maintain a constant cell volume in response to extracellular or intracellular osmotic changes. The VRAC channel conducts iodide better than chloride and can also conduct organic osmolytes like taurine. Plays a redundant role in the efflux of amino acids, such as aspartate and glutamate, in response to osmotic stress. The VRAC channel also mediates transport of immunoreactive cyclic dinucleotide GMP-AMP (2'-3'-cGAMP), an immune messenger produced in response to DNA virus in the cytosol. Channel activity requires LRRC8A plus at least one other family member (LRRC8B, LRRC8C, LRRC8D or LRRC8E); channel characteristics depend on the precise subunit composition. The chain is Volume-regulated anion channel subunit LRRC8C from Homo sapiens (Human).